The primary structure comprises 273 residues: Aegyptin (273 aa).

The N-terminal stretch at 1–19 (MKPLVKLFLLFCLVGIVLS) is a signal peptide. Residues 20–160 (RPMPEDEEPV…SEKNDPADTY (141 aa)) form a disordered region. Acidic residues predominate over residues 24–62 (EDEEPVAEGGDDDASGESEGEEETTDDAGGDGGEEENEG). The segment covering 63–86 (EEHAGDKDAGGEDTGKEENTGHDD) has biased composition (basic and acidic residues). The span at 87–145 (AGEEDAGEEDAGEEDAGEEDAGEEDAEKEEGEKEDAGDDAGSDDGEEDSTGGDEGEDNA) shows a compositional bias: acidic residues. A mediates binding of host collagen region spans residues 137 to 273 (GGDEGEDNAE…IKSCVSSKGR (137 aa)). Residues 146–158 (EDSKGSEKNDPAD) are compositionally biased toward basic and acidic residues. Cystine bridges form between Cys-213–Cys-267 and Cys-235–Cys-245.

The protein belongs to the aegyptin family. As to quaternary structure, monomer; exhibits non-globular elongated shape in solution. Female saliva (at protein level). Adult female salivary gland (at protein level).

Its subcellular location is the secreted. Modulates blood feeding of female mosquitoes on vertebrate hosts. Inhibits collagen-induced platelet aggregation in the host via preventing collagen interaction with its three major ligands: glycoprotein VI, integrin alpha-2/beta-1 (ITGA2/ITGB1) and von Willebrand factor (VWF). Prevents collagen-mediated thrombus formation in the host. Binds to host collagens but not to laminin, vitronectin (VTN), fibronectin (FN1), von Willebrand factor (VWF) and fibrinogen. Influences cytokine production and populations of circulating leukocytes. Its function is as follows. (Microbial infection) Reduces replication of dengue virus type 2 at inoculation site and viremia levels on day 2 post-inoculation. Promotes production of pro-inflammatory cytokines, such as GM-CSF (CSF2), IFN-gamma (IFNG), IL5 and IL6, in the lymph nodes of mice infected with dengue virus type 2. Increases the number of circulating eosinophils in mice infected with dengue virus type 2. Decreases the number of circulating monocytes in mice infected with dengue virus type 2. This is Aegyptin from Aedes aegypti (Yellowfever mosquito).